A 223-amino-acid chain; its full sequence is Deoxyribose-phosphate aldolase (223 aa).

The active-site Proton donor/acceptor is aspartate 92. Residue lysine 153 is the Schiff-base intermediate with acetaldehyde of the active site. Lysine 182 serves as the catalytic Proton donor/acceptor.

Belongs to the DeoC/FbaB aldolase family. DeoC type 1 subfamily.

The protein resides in the cytoplasm. It catalyses the reaction 2-deoxy-D-ribose 5-phosphate = D-glyceraldehyde 3-phosphate + acetaldehyde. It participates in carbohydrate degradation; 2-deoxy-D-ribose 1-phosphate degradation; D-glyceraldehyde 3-phosphate and acetaldehyde from 2-deoxy-alpha-D-ribose 1-phosphate: step 2/2. In terms of biological role, catalyzes a reversible aldol reaction between acetaldehyde and D-glyceraldehyde 3-phosphate to generate 2-deoxy-D-ribose 5-phosphate. The polypeptide is Deoxyribose-phosphate aldolase (Mycoplasmoides gallisepticum (strain R(low / passage 15 / clone 2)) (Mycoplasma gallisepticum)).